The sequence spans 69 residues: Ubiquitin-ribosomal protein eL40 fusion protein (69 aa).

Residues 1-17 enclose the Ubiquitin-like domain; that stretch reads NIQKESTLHLVLRLRGG. Residue Lys4 forms a Glycyl lysine isopeptide (Lys-Gly) (interchain with G-Cter in ubiquitin) linkage. Gly17 is covalently cross-linked (Glycyl lysine isopeptide (Gly-Lys) (interchain with K-? in acceptor proteins)). Residue Lys39 is modified to N6,N6,N6-trimethyllysine.

This sequence in the N-terminal section; belongs to the ubiquitin family. It in the C-terminal section; belongs to the eukaryotic ribosomal protein eL40 family. Part of the 60S ribosomal subunit. Post-translationally, trimethylation of Lys-39 ('Lys-22' of the mature chain) by SMYD5 promotes translation elongation and protein synthesis.

The protein resides in the cytoplasm. It is found in the nucleus. In terms of biological role, exists either covalently attached to another protein, or free (unanchored). When covalently bound, it is conjugated to target proteins via an isopeptide bond either as a monomer (monoubiquitin), a polymer linked via different Lys residues of the ubiquitin (polyubiquitin chains) or a linear polymer linked via the initiator Met of the ubiquitin (linear polyubiquitin chains). Polyubiquitin chains, when attached to a target protein, have different functions depending on the Lys residue of the ubiquitin that is linked: Lys-6-linked may be involved in DNA repair; Lys-11-linked is involved in ERAD (endoplasmic reticulum-associated degradation) and in cell-cycle regulation; Lys-29-linked is involved in proteotoxic stress response and cell cycle; Lys-33-linked is involved in kinase modification; Lys-48-linked is involved in protein degradation via the proteasome; Lys-63-linked is involved in endocytosis, DNA-damage responses as well as in signaling processes leading to activation of the transcription factor NF-kappa-B. Linear polymer chains formed via attachment by the initiator Met lead to cell signaling. Ubiquitin is usually conjugated to Lys residues of target proteins, however, in rare cases, conjugation to Cys or Ser residues has been observed. When polyubiquitin is free (unanchored-polyubiquitin), it also has distinct roles, such as in activation of protein kinases, and in signaling. Component of the 60S subunit of the ribosome. The polypeptide is Ubiquitin-ribosomal protein eL40 fusion protein (UBA52) (Gallus gallus (Chicken)).